A 249-amino-acid polypeptide reads, in one-letter code: Formylaminopyrimidine import ATP-binding protein ThiZ (249 aa).

One can recognise an ABC transporter domain in the interval 6–228; that stretch reads LTFEEVSFAY…RRKMETTEKM (223 aa). 39 to 46 is an ATP binding site; that stretch reads AKSGSGKS.

This sequence belongs to the ABC transporter superfamily. In terms of assembly, the complex is likely composed of an ATP-binding protein (ThiZ), a transmembrane protein (ThiX) and a solute-binding protein (ThiY).

It localises to the cell membrane. The protein operates within cofactor biosynthesis; thiamine diphosphate biosynthesis. In terms of biological role, participates in a thiamine pyrimidine salvage pathway as part of the ABC transporter complex ThiXYZ involved in the import of thiamine degradation products such as the formylaminopyrimidine N-formyl-4-amino-5-aminomethyl-2-methylpyrimidine (FAMP). Is likely responsible for energy coupling to the transport system. The sequence is that of Formylaminopyrimidine import ATP-binding protein ThiZ from Halalkalibacterium halodurans (strain ATCC BAA-125 / DSM 18197 / FERM 7344 / JCM 9153 / C-125) (Bacillus halodurans).